We begin with the raw amino-acid sequence, 608 residues long: MTATTTLKSFNYLSLINHRLNHNSYAILSSPLLPRSHPASTSFSNSGFRFFQSNHLFSSQSGSLMEVFKAAFSEASNSCDRIAIKADGKSYSYGQLTSSALRISKLFLKDDTTNGGQETKKYEGFGSLKGARIGIVAKPSAEFVAGVLGTWFSGGVAVPLALSYPEAELLHVMNDSDISLLLSTEDHSETMKTIAAKSGARFHLIPPVVNSTSETVACNQFQDDSFEAEGKFLDDPALIVYTSGTTGKPKGVVHTHNSINSQVRMLTEAWEYTSADHFLHCLPLHHVHGLFNALFAPLYARSLVEFLPKFSVSGIWRRWRESYPVNDEKTNDSITVFTGVPTMYTRLIQGYEAMDKEMQDSSAFAARKLRLMMSGSSALPRPVMHQWESITGHRLLERYGMTEFVMAMSNPLRGARNAGTVGKPLPGVEAKIKEDENDANGVGEICVKSPSLFKEYWNLPEVTKESFTEDGYFKTGDAGRVDEDGYYVILGRNSADIMKVGGYKLSALEIESTLLEHPTVAECCVLGLTDNDYGEAVTAIIIAESAAKKRREDESKPVITLEELCGWAKDKLAPYKLPTRLLIWESLPRNAMGKVNKKELKKSLENQE.

Belongs to the ATP-dependent AMP-binding enzyme family. As to expression, expressed in flowers.

Its subcellular location is the cytoplasm. It localises to the nucleus. It catalyses the reaction malonate + ATP + CoA = malonyl-CoA + AMP + diphosphate. Malonate--CoA ligase that catalyzes the formation of malonyl-CoA directly from malonate and CoA. May be required for the detoxification of malonate. The polypeptide is Malonate--CoA ligase (AAE13) (Arabidopsis thaliana (Mouse-ear cress)).